Consider the following 225-residue polypeptide: uncharacterized protein (225 aa).

Residues 181–203 (INIFVVFMFIIYLLFYIISSTVF) form a helical membrane-spanning segment.

The protein localises to the cell membrane. This is an uncharacterized protein from Bacillus anthracis.